The sequence spans 347 residues: Guanine nucleotide-binding protein alpha-6 subunit (347 aa).

A G-alpha domain is found at 30 to 347 (GITQVLLLGA…IIVGHVMDLV (318 aa)). Positions 33–46 (QVLLLGAGESGKST) are G1 motif. Residues 38–45 (GAGESGKS), 172–178 (LRARVTT), 197–201 (DVGGQ), 266–269 (NKKD), and Ala-322 contribute to the GTP site. Mg(2+)-binding residues include Ser-45 and Thr-178. The interval 170-178 (DALRARVTT) is G2 motif. The G3 motif stretch occupies residues 193-202 (MKIIDVGGQR). Residues 262 to 269 (ILFLNKKD) form a G4 motif region. Positions 320-325 (TIAVDT) are G5 motif.

It belongs to the G-alpha family. In terms of assembly, g proteins are composed of 3 units; alpha, beta and gamma. The alpha chain contains the guanine nucleotide binding site.

Functionally, guanine nucleotide-binding proteins (G proteins) are involved as modulators or transducers in various transmembrane signaling systems. G alpha-6 is involved in the folic acid chemotaxis signal transduction pathway. In Dictyostelium discoideum (Social amoeba), this protein is Guanine nucleotide-binding protein alpha-6 subunit (gpaF).